Consider the following 160-residue polypeptide: Non-secretory ribonuclease (160 aa).

The N-terminal stretch at 1-27 is a signal peptide; it reads MVPKLFTSPICLLLLLGLMGVEGSLHA. Tryptophan 34 carries a C-linked (Man) tryptophan glycan. Catalysis depends on histidine 42, which acts as the Proton acceptor. Asparagine 44 is a glycosylation site (N-linked (GlcNAc...) asparagine). Disulfide bonds link cysteine 50-cysteine 110, cysteine 64-cysteine 122, cysteine 82-cysteine 137, and cysteine 89-cysteine 98. Tyrosine 60 carries the post-translational modification 3'-nitrotyrosine. 65–69 is a substrate binding site; sequence KNQNT. Residues asparagine 92, asparagine 111, and asparagine 138 are each glycosylated (N-linked (GlcNAc...) asparagine). Residue histidine 155 is the Proton donor of the active site.

It belongs to the pancreatic ribonuclease family. In terms of assembly, interacts with and forms a tight 1:1 complex with RNH1. Dimerization of two such complexes may occur.

The protein localises to the lysosome. Its subcellular location is the cytoplasmic granule. The catalysed reaction is an [RNA] containing cytidine + H2O = an [RNA]-3'-cytidine-3'-phosphate + a 5'-hydroxy-ribonucleotide-3'-[RNA].. It carries out the reaction an [RNA] containing uridine + H2O = an [RNA]-3'-uridine-3'-phosphate + a 5'-hydroxy-ribonucleotide-3'-[RNA].. Its function is as follows. This is a non-secretory ribonuclease. It is a pyrimidine specific nuclease with a slight preference for U. Cytotoxin and helminthotoxin. Possesses a wide variety of biological activities. This is Non-secretory ribonuclease (RNASE2) from Macaca nemestrina (Pig-tailed macaque).